A 513-amino-acid polypeptide reads, in one-letter code: Maturase K (513 aa).

This sequence belongs to the intron maturase 2 family. MatK subfamily.

The protein localises to the plastid. It is found in the chloroplast. Functionally, usually encoded in the trnK tRNA gene intron. Probably assists in splicing its own and other chloroplast group II introns. The chain is Maturase K from Astrebla lappacea (Curly Mitchell grass).